The sequence spans 308 residues: D-alanine--D-alanine ligase (308 aa).

Residues 103–302 (KFVFRAAGLP…YGELVSWMVE (200 aa)) form the ATP-grasp domain. Residue 130 to 184 (MDPPYVIKPVSEGSSVGVFIVRAGDNRPPAELTSAEWNLGDEVMAERYIAGRELT) participates in ATP binding. Mg(2+) contacts are provided by Asp-252, Glu-269, and Asn-271.

This sequence belongs to the D-alanine--D-alanine ligase family. The cofactor is Mg(2+). Mn(2+) serves as cofactor.

The protein localises to the cytoplasm. It catalyses the reaction 2 D-alanine + ATP = D-alanyl-D-alanine + ADP + phosphate + H(+). Its pathway is cell wall biogenesis; peptidoglycan biosynthesis. Cell wall formation. The protein is D-alanine--D-alanine ligase of Parvibaculum lavamentivorans (strain DS-1 / DSM 13023 / NCIMB 13966).